The sequence spans 49 residues: uncharacterized protein (49 aa).

Residues 31–48 (PDLYTIIVSYFSIFSLFF) form a helical membrane-spanning segment.

The protein resides in the membrane. This is an uncharacterized protein from Saccharomyces cerevisiae (strain ATCC 204508 / S288c) (Baker's yeast).